Consider the following 197-residue polypeptide: Phosphoheptose isomerase (197 aa).

Positions 36-197 (MTASLMNNGK…IDCLLLGVEE (162 aa)) constitute an SIS domain. Position 51–53 (51–53 (NGG)) interacts with substrate. 2 residues coordinate Zn(2+): H60 and E64. Residues E64, 93 to 94 (ND), 119 to 121 (STS), S124, and Q174 contribute to the substrate site. Q174 and H182 together coordinate Zn(2+).

Belongs to the SIS family. GmhA subfamily. As to quaternary structure, homotetramer. The cofactor is Zn(2+).

The protein localises to the cytoplasm. It catalyses the reaction 2 D-sedoheptulose 7-phosphate = D-glycero-alpha-D-manno-heptose 7-phosphate + D-glycero-beta-D-manno-heptose 7-phosphate. The protein operates within carbohydrate biosynthesis; D-glycero-D-manno-heptose 7-phosphate biosynthesis; D-glycero-alpha-D-manno-heptose 7-phosphate and D-glycero-beta-D-manno-heptose 7-phosphate from sedoheptulose 7-phosphate: step 1/1. Functionally, catalyzes the isomerization of sedoheptulose 7-phosphate in D-glycero-D-manno-heptose 7-phosphate. This Azoarcus sp. (strain BH72) protein is Phosphoheptose isomerase.